Here is a 290-residue protein sequence, read N- to C-terminus: MANQKGLHVVMMIITVWLLYAAPNIHGWGKEGHEIICKIAQTRLDETAAKAVKELLPESAEGDLSSLCLWADRVKFRYHWSSPLHYINTPDACSYQYNRDCKDESGEKGRCVAGAIYNYTTQLLSYKTAASSQSQYNLTEALLFVSHFMGDIHQPLHVSYASDKGGNTIEVHWYTRKANLHHIWDSNIIETAEADLYNSALEGMVDALKKNITTEWADQVKRWETCTKKTACPDIYASEGIQAACDWAYKGVTEGDTLEDEYFYSRLPIVYQRLAQGGVRLAATLNRIFG.

An N-terminal signal peptide occupies residues 1–27 (MANQKGLHVVMMIITVWLLYAAPNIHG). Tryptophan 28 and histidine 33 together coordinate a divalent metal cation. Residue 28–33 (WGKEGH) coordinates substrate. A disulfide bond links cysteine 37 and cysteine 68. The a divalent metal cation site is built by aspartate 72 and histidine 85. Substrate-binding positions include 72 to 76 (DRVKF), 85 to 88 (HYIN), and 94 to 99 (SYQYNR). 3 cysteine pairs are disulfide-bonded: cysteine 93/cysteine 245, cysteine 101/cysteine 111, and cysteine 226/cysteine 232. Asparagine 118 and tyrosine 136 together coordinate substrate. N-linked (GlcNAc...) asparagine glycosylation is present at asparagine 118. Asparagine 137 carries N-linked (GlcNAc...) asparagine glycosylation. 5 residues coordinate a divalent metal cation: histidine 147, aspartate 151, histidine 157, histidine 181, and aspartate 185. The interval 147-196 (HFMGDIHQPLHVSYASDKGGNTIEVHWYTRKANLHHIWDSNIIETAEADL) is substrate binding. An N-linked (GlcNAc...) asparagine glycan is attached at asparagine 211. The propeptide at 283–290 (ATLNRIFG) is removed in mature form.

This sequence belongs to the nuclease type I family. In terms of assembly, monomer. Requires Mn(2+) as cofactor. It depends on Ca(2+) as a cofactor. The cofactor is Zn(2+). In terms of processing, N-glycosylation is required for enzymatic stability and activity.

The catalysed reaction is Endonucleolytic cleavage to 5'-phosphomononucleotide and 5'-phosphooligonucleotide end-products.. SsDNase activity is inhibited by the divalent cation chelator EDTA and the reducing agent DTT. Divalent metal ions (e.g. Ca(2+), Mg(2+) and Zn(2+)) and DTT represses RNase activity. RNase activity is enhanced by EDTA. Also repressed by vanadate (VO(4)(3-)) and phosphate (PO(4)(3-)) by occupying the active site. Its function is as follows. Endonuclease mostly active on RNA and ssDNA, and to a lower extent, on dsDNA. Can cleave mismatch regions in heteroduplex DNA containing single base pair mismatches or insertion/deletion bases. In contradiction with PubMed:22506810, cannot hydrolyze single-stranded DNA and does not cleave mismatches. This chain is Endonuclease 2, found in Arabidopsis thaliana (Mouse-ear cress).